Consider the following 458-residue polypeptide: MVQISEVKGNSRDNRTAAHTHIKGLGLNSQGIAEKQASGFVGQTTAREACGVVVDLIKAHKMAGRGVLLAGGPGTGKTALALAISQELGTKIPFCPITGSEIYSTEVKKTEVLMENFRRAIGLKVRETKEVYEGEVTELTPEEAENPLGGYGKTITTLLIGLKSAKGQKKLRLDPSIYEAIQKERVTVGDVIYIEANTGACKRVGRSDAYATEFDLEAEEYVPIPKGEVHKKKEIVQDVSLHDLDVANARPQGGQDIMSMMGQLMKPKMTEITDKLRSEINKVVSKYIDQGVAELVPGVLFIDEAHMLDVECFTYLNKALESPISPIVVLASNRGMTGIRGAEDLVAAHGIPPDFLSRLLIIPTTAYDPEEIKRIVKIRSTTEGVKITEAAIDKIAEHGVRISLRYCLQLLTPASILAKVNGRNEIDVQDVAECEDLFLDARRSAALLSSEQGQEFIC.

ATP is bound at residue G71–T78.

This sequence belongs to the RuvB family. In terms of assembly, may form heterododecamers with hel-2/rvb2. Component of the SWR1 chromatin remodeling complex, the INO80 chromatin remodeling complex, and of the R2TP complex.

It is found in the nucleus. It catalyses the reaction ATP + H2O = ADP + phosphate + H(+). In terms of biological role, DNA helicase which participates in several chromatin remodeling complexes, including the SWR1 and the INO80 complexes. The SWR1 complex mediates the ATP-dependent exchange of histone H2A for the H2A variant H2A.Z leading to transcriptional regulation of selected genes by chromatin remodeling. The INO80 complex remodels chromatin by shifting nucleosomes and is involved in DNA repair. Also involved in pre-rRNA processing. The polypeptide is RuvB-like helicase 1 (hel-1) (Neurospora crassa (strain ATCC 24698 / 74-OR23-1A / CBS 708.71 / DSM 1257 / FGSC 987)).